Consider the following 32-residue polypeptide: Cathepsin B-like cysteine proteinase (32 aa).

Positions 1 to 22 (KPNYKRQFEPFSDELIHYINLE) are cleaved as a propeptide — activation peptide.

The protein belongs to the peptidase C1 family.

In terms of biological role, thiol protease. The polypeptide is Cathepsin B-like cysteine proteinase (Fasciola hepatica (Liver fluke)).